We begin with the raw amino-acid sequence, 436 residues long: Arginine-hydroxylase NDUFAF5, mitochondrial (436 aa).

A mitochondrion-targeting transit peptide spans 1–25; that stretch reads MLRTTFRKGFNLKCFSKDWNQTRQY. The interval 365–436 is disordered; the sequence is VTLSQQQQQQ…DEINKNKDDK (72 aa). Residues 369-380 show a composition bias toward low complexity; that stretch reads QQQQQQGIEPQQ. 2 stretches are compositionally biased toward basic and acidic residues: residues 391-411 and 421-436; these read PKTDDFVIKRLDYHGNFHFEK and QNKESSDEINKNKDDK.

Belongs to the methyltransferase superfamily.

Its subcellular location is the mitochondrion. Functionally, involved in the assembly of mitochondrial NADH:ubiquinone oxidoreductase complex (complex I, MT-ND1) at early stages. Probably acts as an arginine hydroxylase. May also have methyltransferase activity. This Dictyostelium discoideum (Social amoeba) protein is Arginine-hydroxylase NDUFAF5, mitochondrial.